The primary structure comprises 670 residues: Sodium/potassium/calcium exchanger 2 (670 aa).

The Cytoplasmic segment spans residues 1–38; it reads MDLHQSATVRLLQEWCSHESPSGCRRHYNTRKKLKLIR. A helical membrane pass occupies residues 39–59; the sequence is VIGLVMGLVAVSTVPFSISAF. Residues 60–133 lie on the Extracellular side of the membrane; the sequence is TETYSQNNRG…DVFSLEERRK (74 aa). Disordered stretches follow at residues 67-86 and 91-122; these read NRGE…HRQR and LNDK…GDYP. Residues 106 to 122 are compositionally biased toward basic and acidic residues; it reads QEDRSENGTDHAQGDYP. A glycan (N-linked (GlcNAc...) asparagine) is linked at asparagine 112. Residues 134–154 traverse the membrane as a helical segment; that stretch reads GAIILHVIGMIYMFIALAIVC. Topologically, residues 155-179 are cytoplasmic; that stretch reads DEFFVPSLTVITEKLGISDDVAGAT. An Alpha-1 repeat occupies 175–215; the sequence is VAGATFMAAGGSAPELFTSLIGVFIAHSNVGIGTIVGSAVF. Residues 180–200 form a helical membrane-spanning segment; sequence FMAAGGSAPELFTSLIGVFIA. Residues 201–205 are Extracellular-facing; it reads HSNVG. A helical membrane pass occupies residues 206-226; sequence IGTIVGSAVFNILFVIGMCAL. The Cytoplasmic segment spans residues 227 to 244; the sequence is FSREILNLTWWPLFRDVS. Residues 245–265 form a helical membrane-spanning segment; sequence FYIVDLIMLIIFFLDNVIMWW. Glutamate 266 is a topological domain (extracellular). A helical transmembrane segment spans residues 267-287; that stretch reads SLLLLTAYFAYVVFMKFNVQV. Residues 288–506 are Cytoplasmic-facing; that stretch reads ERWVKQMINR…PDVRKPASKK (219 aa). A disordered region spans residues 312–335; it reads ASTAGDKEEPTLPNKPRLQRGGSS. Serine 337 and serine 341 each carry phosphoserine. Disordered stretches follow at residues 394–414 and 450–471; these read KCQV…DYAA and AADA…LSLS. The chain crosses the membrane as a helical span at residues 507-527; it reads FFPITFFGSITWIAVFSYLMV. Residues 528–542 are Extracellular-facing; sequence WWAHQVGETIGISEE. A helical transmembrane segment spans residues 543-563; the sequence is IMGLTILAAGTSIPDLITSVI. An Alpha-2 repeat occupies 550-581; it reads AAGTSIPDLITSVIVARKGLGDMAVSSSVGSN. Over 564 to 578 the chain is Cytoplasmic; the sequence is VARKGLGDMAVSSSV. A helical membrane pass occupies residues 579 to 599; the sequence is GSNIFDITVGLPLPWLLYTII. Residues 600–611 are Extracellular-facing; sequence HRFKPVTVSSNG. Residues 612–632 form a helical membrane-spanning segment; it reads LFCAIVLLFIMLIFVILSIAL. The Cytoplasmic portion of the chain corresponds to 633–639; the sequence is CKWRMNK. Residues 640-660 traverse the membrane as a helical segment; it reads ILGFIMFGLYFAFLVVSVLLE. The Extracellular segment spans residues 661 to 670; that stretch reads DKVLECPVSI.

The protein belongs to the Ca(2+):cation antiporter (CaCA) (TC 2.A.19) family. SLC24A subfamily. As to expression, expressed abundantly in all regions of the brain and weakly in the eye, large intestine and adrenal tissue.

It is found in the cell membrane. It catalyses the reaction Ca(2+)(out) + K(+)(out) + 4 Na(+)(in) = Ca(2+)(in) + K(+)(in) + 4 Na(+)(out). Calcium, potassium:sodium antiporter that transports 1 Ca(2+) and 1 K(+) in exchange for 4 Na(+). Required for learming and memory by regulating neuronal Ca(2+), which is essential for the development of synaptic plasticity. This chain is Sodium/potassium/calcium exchanger 2 (Slc24a2), found in Rattus norvegicus (Rat).